A 186-amino-acid chain; its full sequence is Bifunctional protein PyrR (186 aa).

Residues 101 to 113 carry the PRPP-binding motif; that stretch reads VVLVDDVLYTGRT.

Belongs to the purine/pyrimidine phosphoribosyltransferase family. PyrR subfamily.

The enzyme catalyses UMP + diphosphate = 5-phospho-alpha-D-ribose 1-diphosphate + uracil. In terms of biological role, regulates the transcription of the pyrimidine nucleotide (pyr) operon in response to exogenous pyrimidines. Its function is as follows. Also displays a weak uracil phosphoribosyltransferase activity which is not physiologically significant. This Syntrophobacter fumaroxidans (strain DSM 10017 / MPOB) protein is Bifunctional protein PyrR.